Consider the following 114-residue polypeptide: Lymphotactin (114 aa).

Residues 1–21 (MRLLLLTFLGVCCFAAWVVEG) form the signal peptide. Cysteine 32 and cysteine 69 are disulfide-bonded. The disordered stretch occupies residues 87–114 (RASASKSKAETIPTQAQRSASTAVTLTG). Polar residues predominate over residues 98-114 (IPTQAQRSASTAVTLTG).

It belongs to the intercrine gamma family.

It is found in the secreted. Its function is as follows. Chemotactic activity for lymphocytes but not for monocytes or neutrophils. In thymus, mediates medullary accumulation of thymic dendritic cells and contributes to regulatoy T cell development, playing a role in self-tolerance establishment. The protein is Lymphotactin (Xcl1) of Rattus norvegicus (Rat).